Consider the following 208-residue polypeptide: Sexual inducer glycoprotein (208 aa).

A signal peptide spans Met1–Ala11. N-linked (GlcNAc...) asparagine glycans are attached at residues Asn89, Asn119, Asn131, Asn139, Asn146, and Asn188.

In terms of biological role, the sexual inducer is a glycoprotein synthesized and released by sexual males at about the time they release sperm packets. It is one of the most potent biological effector molecules known: it exhibits full effectiveness in converting asexually growing males and females to the sexual pathway at about 10(-7) m. The protein is Sexual inducer glycoprotein of Volvox carteri (Green alga).